The sequence spans 102 residues: Large ribosomal subunit protein bL21 (102 aa).

The protein belongs to the bacterial ribosomal protein bL21 family. As to quaternary structure, part of the 50S ribosomal subunit. Contacts protein L20.

In terms of biological role, this protein binds to 23S rRNA in the presence of protein L20. This is Large ribosomal subunit protein bL21 from Limosilactobacillus fermentum (strain NBRC 3956 / LMG 18251) (Lactobacillus fermentum).